The sequence spans 687 residues: MPKQIIIAEQHQIAAVFSEDQIQELVVATGHHQIGDIYLGVVENVLPGIDAAFVNIGDPERNGFIHVTDLGPLRLKRTAAAITELLAPQQKVLVQVMKEPTGTKGPRLTGNITLPGRYVVLMPYGRGVNLSRRIKSESERNRLRALAILIKPAGMGLLVRTEAEGKPEEAIIEDLEVLQKQWEAIQQEAQSTRAPALLNRDDDFIQRVLRDMYGADVNRIVVDSSTGLKRVKQYLQNWSGGQTPQGLLIDHHRDRSPILEYFRINAAIREALKPRVDLPSGGYIIIEPTEALTVIDVNSGSFTRSATARETVLWTNCEAATEIARQLRLRNIAGVIVVDFIDMESRRDQLQVLEHFNKALRADKARPQIAQLTELGLVELTRKRQGQNIYELFGDTCPACGGLGHTVRLPGETENRLPTPAAEVPERFVSLPTREPRLPTARTTEPRETYDGFGEAFENDSDLGALNLINHPSYQELNDNNKRRARTRRSRIGINGTNGKDEQRITANPLAFISESDLDLDGDVELSAPPELPTPNLGKSGWIERAERTKVIKTEPVKPVVEPPEIRTVEMTPEEQDIFALMGISPLIKLEQEVKNPKSVIINIVQPGQTPTIPTEITPEPVAKVTPSVEVNTPKVKLESKSVSVAATEPIKLTETMEESEVNAASTANRRRRRRSSASDSDTGEDS.

The S1 motif domain maps to 35 to 117 (GDIYLGVVEN…LTGNITLPGR (83 aa)). Mg(2+) is bound by residues Asp-296 and Asp-339. Residues Cys-397 and Cys-400 each coordinate Zn(2+). A disordered region spans residues 650–687 (PIKLTETMEESEVNAASTANRRRRRRSSASDSDTGEDS). The short motif at 670–678 (RRRRRRSSA) is the C4 Arg-rich motif, necessary and sufficient to confer PNPase binding on another protein element.

Belongs to the RNase E/G family. May form homodimers or higher order multimers. Interacts with polynucleotide phosphorylase (PNPase, pnp) via the C4 Arg-rich motif (residues 670-678). A homotetramer formed by a dimer of dimers. Mg(2+) is required as a cofactor. It depends on Zn(2+) as a cofactor.

Its subcellular location is the cytoplasm. The catalysed reaction is Endonucleolytic cleavage of single-stranded RNA in A- and U-rich regions.. Its function is as follows. Endoribonuclease that plays a central role in rRNA and tRNA processing and mRNA decay. Has been shown to act on 9S rRNA (the precursor of 5S rRNA). This chain is Ribonuclease E, found in Nostoc sp. (strain PCC 7120 / SAG 25.82 / UTEX 2576).